Here is a 356-residue protein sequence, read N- to C-terminus: UDP-N-acetylglucosamine--N-acetylmuramyl-(pentapeptide) pyrophosphoryl-undecaprenol N-acetylglucosamine transferase (356 aa).

Residues arginine 166, serine 196, and glutamine 290 each coordinate UDP-N-acetyl-alpha-D-glucosamine.

The protein belongs to the glycosyltransferase 28 family. MurG subfamily.

The protein resides in the cell membrane. It catalyses the reaction Mur2Ac(oyl-L-Ala-gamma-D-Glu-L-Lys-D-Ala-D-Ala)-di-trans,octa-cis-undecaprenyl diphosphate + UDP-N-acetyl-alpha-D-glucosamine = beta-D-GlcNAc-(1-&gt;4)-Mur2Ac(oyl-L-Ala-gamma-D-Glu-L-Lys-D-Ala-D-Ala)-di-trans,octa-cis-undecaprenyl diphosphate + UDP + H(+). Its pathway is cell wall biogenesis; peptidoglycan biosynthesis. Cell wall formation. Catalyzes the transfer of a GlcNAc subunit on undecaprenyl-pyrophosphoryl-MurNAc-pentapeptide (lipid intermediate I) to form undecaprenyl-pyrophosphoryl-MurNAc-(pentapeptide)GlcNAc (lipid intermediate II). The chain is UDP-N-acetylglucosamine--N-acetylmuramyl-(pentapeptide) pyrophosphoryl-undecaprenol N-acetylglucosamine transferase from Staphylococcus aureus (strain MRSA252).